Consider the following 122-residue polypeptide: uncharacterized protein (122 aa).

Helical transmembrane passes span 9–29 (VATV…STWV) and 60–80 (LFSF…CLIM).

The protein localises to the cytoplasm. It localises to the membrane. This is an uncharacterized protein from Schizosaccharomyces pombe (strain 972 / ATCC 24843) (Fission yeast).